The sequence spans 103 residues: SOSS complex subunit C (103 aa).

Belongs to the SOSS-C family. In terms of assembly, belongs to the multiprotein complex Integrator. Component of the SOSS complex, composed of SOSS-B (SOSS-B1/NABP2 or SOSS-B2/NABP1), SOSS-A/INTS3 and SOSS-C/INIP.

It is found in the nucleus. Its function is as follows. Component of the SOSS complex, a multiprotein complex that functions downstream of the MRN complex to promote DNA repair and G2/M checkpoint. The SOSS complex associates with single-stranded DNA at DNA lesions and influences diverse endpoints in the cellular DNA damage response including cell-cycle checkpoint activation, recombinational repair and maintenance of genomic stability. Required for efficient homologous recombination-dependent repair of double-strand breaks (DSBs). This is SOSS complex subunit C (INIP) from Gallus gallus (Chicken).